A 436-amino-acid polypeptide reads, in one-letter code: Eukaryotic translation initiation factor 5 (436 aa).

GTP is bound at residue 27 to 34 (GKGNGIKT). A disordered region spans residues 177–203 (NSDKGSSNDDDDDDWEPEPVEPNGMLS). Residues 184–195 (NDDDDDDWEPEP) are compositionally biased toward acidic residues. The region spanning 216 to 379 (EKSEEQRLDM…KEAEEETEEE (164 aa)) is the W2 domain. Residues 396–408 (LRQQKEKAAREAQ) are compositionally biased toward basic and acidic residues. A disordered region spans residues 396–436 (LRQQKEKAAREAQQKSAKATNGNAAAASGANDEEDLDIDDI). The segment covering 409-425 (QKSAKATNGNAAAASGA) has biased composition (low complexity). Over residues 426–436 (NDEEDLDIDDI) the composition is skewed to acidic residues.

The protein belongs to the eIF-2-beta/eIF-5 family.

Catalyzes the hydrolysis of GTP bound to the 40S ribosomal initiation complex (40S.mRNA.Met-tRNA[F].eIF-2.GTP) with the subsequent joining of a 60S ribosomal subunit resulting in the release of eIF-2 and the guanine nucleotide. The subsequent joining of a 60S ribosomal subunit results in the formation of a functional 80S initiation complex (80S.mRNA.Met-tRNA[F]). The sequence is that of Eukaryotic translation initiation factor 5 from Caenorhabditis elegans.